The sequence spans 310 residues: ADP-L-glycero-D-manno-heptose-6-epimerase (310 aa).

Residues 10–11, 31–32, K38, K53, 75–79, and N92 contribute to the NADP(+) site; these read FI, DN, and EGACS. Y140 serves as the catalytic Proton acceptor. K144 is a binding site for NADP(+). N169 lines the substrate pocket. Residues V170 and K178 each coordinate NADP(+). K178 serves as the catalytic Proton acceptor. Residues S180, H187, 201–204, R209, and Y272 each bind substrate; that span reads FEGS.

This sequence belongs to the NAD(P)-dependent epimerase/dehydratase family. HldD subfamily. As to quaternary structure, homopentamer. It depends on NADP(+) as a cofactor.

It catalyses the reaction ADP-D-glycero-beta-D-manno-heptose = ADP-L-glycero-beta-D-manno-heptose. It functions in the pathway nucleotide-sugar biosynthesis; ADP-L-glycero-beta-D-manno-heptose biosynthesis; ADP-L-glycero-beta-D-manno-heptose from D-glycero-beta-D-manno-heptose 7-phosphate: step 4/4. Its function is as follows. Catalyzes the interconversion between ADP-D-glycero-beta-D-manno-heptose and ADP-L-glycero-beta-D-manno-heptose via an epimerization at carbon 6 of the heptose. The chain is ADP-L-glycero-D-manno-heptose-6-epimerase from Klebsiella pneumoniae (strain 342).